A 227-amino-acid chain; its full sequence is Cytochrome c oxidase subunit 2 (227 aa).

The Mitochondrial intermembrane segment spans residues 1-14 (MAHATQVGLQDATS). A helical transmembrane segment spans residues 15 to 45 (PIMEELISFHDHALMIIFLISFLVLYALFLT). Over 46–59 (LTTKLTNTNITDAQ) the chain is Mitochondrial matrix. A helical transmembrane segment spans residues 60-87 (EMETVWTILPAIILVLIALPSLRILYLT). At 88 to 227 (DEINDPSFTI…IFEMGPVFTL (140 aa)) the chain is on the mitochondrial intermembrane side. H161, C196, E198, C200, H204, and M207 together coordinate Cu cation. Position 198 (E198) interacts with Mg(2+).

Belongs to the cytochrome c oxidase subunit 2 family. As to quaternary structure, component of the cytochrome c oxidase (complex IV, CIV), a multisubunit enzyme composed of 14 subunits. The complex is composed of a catalytic core of 3 subunits MT-CO1, MT-CO2 and MT-CO3, encoded in the mitochondrial DNA, and 11 supernumerary subunits COX4I, COX5A, COX5B, COX6A, COX6B, COX6C, COX7A, COX7B, COX7C, COX8 and NDUFA4, which are encoded in the nuclear genome. The complex exists as a monomer or a dimer and forms supercomplexes (SCs) in the inner mitochondrial membrane with NADH-ubiquinone oxidoreductase (complex I, CI) and ubiquinol-cytochrome c oxidoreductase (cytochrome b-c1 complex, complex III, CIII), resulting in different assemblies (supercomplex SCI(1)III(2)IV(1) and megacomplex MCI(2)III(2)IV(2)). Found in a complex with TMEM177, COA6, COX18, COX20, SCO1 and SCO2. Interacts with TMEM177 in a COX20-dependent manner. Interacts with COX20. Interacts with COX16. Requires Cu cation as cofactor.

The protein resides in the mitochondrion inner membrane. The catalysed reaction is 4 Fe(II)-[cytochrome c] + O2 + 8 H(+)(in) = 4 Fe(III)-[cytochrome c] + 2 H2O + 4 H(+)(out). Functionally, component of the cytochrome c oxidase, the last enzyme in the mitochondrial electron transport chain which drives oxidative phosphorylation. The respiratory chain contains 3 multisubunit complexes succinate dehydrogenase (complex II, CII), ubiquinol-cytochrome c oxidoreductase (cytochrome b-c1 complex, complex III, CIII) and cytochrome c oxidase (complex IV, CIV), that cooperate to transfer electrons derived from NADH and succinate to molecular oxygen, creating an electrochemical gradient over the inner membrane that drives transmembrane transport and the ATP synthase. Cytochrome c oxidase is the component of the respiratory chain that catalyzes the reduction of oxygen to water. Electrons originating from reduced cytochrome c in the intermembrane space (IMS) are transferred via the dinuclear copper A center (CU(A)) of subunit 2 and heme A of subunit 1 to the active site in subunit 1, a binuclear center (BNC) formed by heme A3 and copper B (CU(B)). The BNC reduces molecular oxygen to 2 water molecules using 4 electrons from cytochrome c in the IMS and 4 protons from the mitochondrial matrix. This is Cytochrome c oxidase subunit 2 (MT-CO2) from Hylobates lar (Lar gibbon).